The following is a 642-amino-acid chain: Threonine--tRNA ligase (642 aa).

Residues 1–61 form the TGS domain; that stretch reads MPIITLPDGS…EEDASLEIIT (61 aa). Residues 244 to 535 are catalytic; it reads DHRKIGKQLD…LIEEYAGFFP (292 aa). Residues Cys335, His386, and His512 each contribute to the Zn(2+) site.

It belongs to the class-II aminoacyl-tRNA synthetase family. In terms of assembly, homodimer. The cofactor is Zn(2+).

The protein resides in the cytoplasm. The enzyme catalyses tRNA(Thr) + L-threonine + ATP = L-threonyl-tRNA(Thr) + AMP + diphosphate + H(+). Functionally, catalyzes the attachment of threonine to tRNA(Thr) in a two-step reaction: L-threonine is first activated by ATP to form Thr-AMP and then transferred to the acceptor end of tRNA(Thr). Also edits incorrectly charged L-seryl-tRNA(Thr). The sequence is that of Threonine--tRNA ligase from Vibrio vulnificus (strain CMCP6).